Reading from the N-terminus, the 84-residue chain is Large ribosomal subunit protein bL31B (84 aa).

This sequence belongs to the bacterial ribosomal protein bL31 family. Type B subfamily. As to quaternary structure, part of the 50S ribosomal subunit.

The chain is Large ribosomal subunit protein bL31B from Rhodococcus opacus (strain B4).